The primary structure comprises 133 residues: Ribosome-binding factor A (133 aa).

Belongs to the RbfA family. Monomer. Binds 30S ribosomal subunits, but not 50S ribosomal subunits or 70S ribosomes.

It localises to the cytoplasm. Its function is as follows. One of several proteins that assist in the late maturation steps of the functional core of the 30S ribosomal subunit. Associates with free 30S ribosomal subunits (but not with 30S subunits that are part of 70S ribosomes or polysomes). Required for efficient processing of 16S rRNA. May interact with the 5'-terminal helix region of 16S rRNA. The polypeptide is Ribosome-binding factor A (Cytophaga hutchinsonii (strain ATCC 33406 / DSM 1761 / CIP 103989 / NBRC 15051 / NCIMB 9469 / D465)).